A 394-amino-acid polypeptide reads, in one-letter code: Elongation factor Tu (394 aa).

Residues 10–204 (KPHVNVGTIG…FLDSYIPEPE (195 aa)) enclose the tr-type G domain. Residues 19 to 26 (GHVDHGKT) form a G1 region. 19 to 26 (GHVDHGKT) is a GTP binding site. A Mg(2+)-binding site is contributed by Thr26. The segment at 60 to 64 (GITIN) is G2. The tract at residues 81-84 (DCPG) is G3. Residues 81–85 (DCPGH) and 136–139 (NKCD) contribute to the GTP site. A G4 region spans residues 136–139 (NKCD). The segment at 174–176 (SAL) is G5.

The protein belongs to the TRAFAC class translation factor GTPase superfamily. Classic translation factor GTPase family. EF-Tu/EF-1A subfamily. In terms of assembly, monomer.

The protein resides in the cytoplasm. It catalyses the reaction GTP + H2O = GDP + phosphate + H(+). GTP hydrolase that promotes the GTP-dependent binding of aminoacyl-tRNA to the A-site of ribosomes during protein biosynthesis. The polypeptide is Elongation factor Tu (Salmonella arizonae (strain ATCC BAA-731 / CDC346-86 / RSK2980)).